Consider the following 133-residue polypeptide: Small ribosomal subunit protein uS9 (133 aa).

Over residues 97-113 the composition is skewed to basic and acidic residues; the sequence is SKQELKSHGFLTRDPRK. The tract at residues 97–133 is disordered; sequence SKQELKSHGFLTRDPRKKERKKYGHKKARKSFQFSKR. Basic residues predominate over residues 114 to 133; that stretch reads KERKKYGHKKARKSFQFSKR.

This sequence belongs to the universal ribosomal protein uS9 family.

In Chlamydia abortus (strain DSM 27085 / S26/3) (Chlamydophila abortus), this protein is Small ribosomal subunit protein uS9.